We begin with the raw amino-acid sequence, 34 residues long: Photosystem II reaction center protein M (34 aa).

Residues 7 to 27 (GFLATLLFVAVPMLFLIGLYI) traverse the membrane as a helical segment.

The protein belongs to the PsbM family. In terms of assembly, PSII is composed of 1 copy each of membrane proteins PsbA, PsbB, PsbC, PsbD, PsbE, PsbF, PsbH, PsbI, PsbJ, PsbK, PsbL, PsbM, PsbT, PsbX, PsbY, Psb30/Ycf12, peripheral proteins PsbO, CyanoQ (PsbQ), PsbU, PsbV and a large number of cofactors. It forms dimeric complexes.

It localises to the cellular thylakoid membrane. One of the components of the core complex of photosystem II (PSII). PSII is a light-driven water:plastoquinone oxidoreductase that uses light energy to abstract electrons from H(2)O, generating O(2) and a proton gradient subsequently used for ATP formation. It consists of a core antenna complex that captures photons, and an electron transfer chain that converts photonic excitation into a charge separation. This subunit is found at the monomer-monomer interface. The sequence is that of Photosystem II reaction center protein M from Prochlorococcus marinus (strain MIT 9303).